The sequence spans 102 residues: Small ribosomal subunit protein uS10 (102 aa).

This sequence belongs to the universal ribosomal protein uS10 family. In terms of assembly, part of the 30S ribosomal subunit.

Its function is as follows. Involved in the binding of tRNA to the ribosomes. In Caldanaerobacter subterraneus subsp. tengcongensis (strain DSM 15242 / JCM 11007 / NBRC 100824 / MB4) (Thermoanaerobacter tengcongensis), this protein is Small ribosomal subunit protein uS10.